An 872-amino-acid chain; its full sequence is DNA mismatch repair protein MutS (872 aa).

622–629 (GPNMAGKS) serves as a coordination point for ATP.

This sequence belongs to the DNA mismatch repair MutS family.

Its function is as follows. This protein is involved in the repair of mismatches in DNA. It is possible that it carries out the mismatch recognition step. This protein has a weak ATPase activity. The chain is DNA mismatch repair protein MutS from Geotalea uraniireducens (strain Rf4) (Geobacter uraniireducens).